A 481-amino-acid chain; its full sequence is Glutamate mutase epsilon subunit (481 aa).

An L-glutamate-binding site is contributed by Arg67. Gly69 serves as a coordination point for adenosylcob(III)alamin. Arg99 serves as a coordination point for L-glutamate. Adenosylcob(III)alamin is bound at residue Asn122. L-glutamate contacts are provided by residues 148 to 149 (RH), Glu170, and Tyr176. Pro179 provides a ligand contact to adenosylcob(III)alamin. Tyr180 contacts L-glutamate. Adenosylcob(III)alamin-binding residues include Phe296, Lys325, Glu329, and Ile333.

This sequence belongs to the methylaspartate mutase GlmE subunit family. Heterotetramer composed of 2 epsilon subunits (GlmE) and 2 sigma subunits (GlmS). GlmE exists as a homodimer and GlmS as a monomer. Adenosylcob(III)alamin serves as cofactor.

The catalysed reaction is (2S,3S)-3-methyl-L-aspartate = L-glutamate. It functions in the pathway amino-acid degradation; L-glutamate degradation via mesaconate pathway; acetate and pyruvate from L-glutamate: step 1/4. Functionally, catalyzes the carbon skeleton rearrangement of L-glutamate to L-threo-3-methylaspartate ((2S,3S)-3-methylaspartate). This Escherichia coli O157:H7 protein is Glutamate mutase epsilon subunit.